Here is a 154-residue protein sequence, read N- to C-terminus: Low molecular weight protein-tyrosine-phosphatase PtpA (154 aa).

Cys8 acts as the Nucleophile in catalysis. The active site involves Arg14. Asp120 functions as the Proton donor in the catalytic mechanism.

This sequence belongs to the low molecular weight phosphotyrosine protein phosphatase family. As to quaternary structure, interacts with host CORO1A. Post-translationally, phosphorylations at Tyr-122 and Tyr-123 are essential for phosphatase activity.

The protein resides in the secreted. It carries out the reaction O-phospho-L-tyrosyl-[protein] + H2O = L-tyrosyl-[protein] + phosphate. Secreted tyrosine phosphatase that plays a critical role during infection as a bacterial effector protein that counteracts host defenses. Required for intramacrophage survival. The polypeptide is Low molecular weight protein-tyrosine-phosphatase PtpA (ptpA) (Staphylococcus aureus (strain MSSA476)).